Here is a 319-residue protein sequence, read N- to C-terminus: MITFLPIIFSILIVVIFVIGNFANGFIALVNSIEWVKRQKISFADQILIALAVSRVGLLWALLLHWYATELNLAFYSVEVRITAYNVWAVTNHFSNWLATSLSMFYLLKIANFSNLIFLRIKRRVKSVILVILLGPLLFLVCHLFVINMNEIVWTKEYEGNLTWKIKLRNAVFLSNMTLTMLANFVPLTLTLISFLLLICSLCKHLKKMQLHGKGSQDPSTKVHIKALQTVTCFLLLCAIYFLSMIISVYNFGRLEKKPVFMFCQAITFSYPSTHAFILIWGNKKLKQIFLSVLWHVRYWVKDRSLRLHRFTRAALCKG.

Met1 is a topological domain (extracellular). A helical transmembrane segment spans residues 2 to 22 (ITFLPIIFSILIVVIFVIGNF). Residues 23-46 (ANGFIALVNSIEWVKRQKISFADQ) lie on the Cytoplasmic side of the membrane. A helical membrane pass occupies residues 47-67 (ILIALAVSRVGLLWALLLHWY). At 68-86 (ATELNLAFYSVEVRITAYN) the chain is on the extracellular side. The chain crosses the membrane as a helical span at residues 87–107 (VWAVTNHFSNWLATSLSMFYL). Over 108–126 (LKIANFSNLIFLRIKRRVK) the chain is Cytoplasmic. A helical transmembrane segment spans residues 127-147 (SVILVILLGPLLFLVCHLFVI). Over 148-178 (NMNEIVWTKEYEGNLTWKIKLRNAVFLSNMT) the chain is Extracellular. Residues Asn161 and Asn176 are each glycosylated (N-linked (GlcNAc...) asparagine). Residues 179–199 (LTMLANFVPLTLTLISFLLLI) form a helical membrane-spanning segment. Topologically, residues 200–229 (CSLCKHLKKMQLHGKGSQDPSTKVHIKALQ) are cytoplasmic. A helical transmembrane segment spans residues 230–250 (TVTCFLLLCAIYFLSMIISVY). Over 251–259 (NFGRLEKKP) the chain is Extracellular. The chain crosses the membrane as a helical span at residues 260–280 (VFMFCQAITFSYPSTHAFILI). Over 281-319 (WGNKKLKQIFLSVLWHVRYWVKDRSLRLHRFTRAALCKG) the chain is Cytoplasmic.

Belongs to the G-protein coupled receptor T2R family.

The protein localises to the membrane. Its function is as follows. Receptor that may play a role in the perception of bitterness and is gustducin-linked. May play a role in sensing the chemical composition of the gastrointestinal content. The activity of this receptor may stimulate alpha gustducin, mediate PLC-beta-2 activation and lead to the gating of TRPM5. The polypeptide is Taste receptor type 2 member 30 (TAS2R30) (Pongo pygmaeus (Bornean orangutan)).